Reading from the N-terminus, the 397-residue chain is Lysophospholipid transporter LplT (397 aa).

Residues 1 to 17 lie on the Periplasmic side of the membrane; sequence MSESVHTNTSLWSKGMK. The chain crosses the membrane as a helical span at residues 18–38; the sequence is AVIVAQFLSAFGDNALLFATL. The Cytoplasmic segment spans residues 39-52; the sequence is ALLKAQFYPEWSQP. A helical membrane pass occupies residues 53-73; sequence ILQMVFVGAYILFAPFVGQVA. Topologically, residues 74–90 are periplasmic; sequence DSFAKGRVMMFANGLKL. The chain crosses the membrane as a helical span at residues 91–111; the sequence is LGAASICFGINPFLGYTLVGV. Residues 112–144 lie on the Cytoplasmic side of the membrane; it reads GAAAYSPAKYGILGELTTGSKLVKANGLMEAST. Residues 145 to 165 traverse the membrane as a helical segment; it reads IAAILLGSVAGGVLADWHILV. Position 166 (A166) is a topological domain, periplasmic. The chain crosses the membrane as a helical span at residues 167-187; the sequence is LVACALAYGGAVVANIYIPKL. At 188-226 the chain is on the cytoplasmic side; the sequence is AAARPGQSWNLISMTRSFLNACTSLWRNGETRFSLVGTS. The helical transmembrane segment at 227–247 threads the bilayer; it reads LFWGAGVTLRFLLVLWVPVAL. Residues 248–256 lie on the Periplasmic side of the membrane; the sequence is GITDNATPT. The helical transmembrane segment at 257–277 threads the bilayer; sequence YLNAMVAIGIVVGAGAAAKLV. The Cytoplasmic portion of the chain corresponds to 278 to 280; sequence TLE. The helical transmembrane segment at 281-301 threads the bilayer; that stretch reads TVSRCMPAGILIGVVVLIFSL. The Periplasmic segment spans residues 302 to 304; that stretch reads QHE. A helical transmembrane segment spans residues 305-325; that stretch reads LLPAYALLMLIGVLGGFFVVP. Over 326–343 the chain is Cytoplasmic; that stretch reads LNALLQERGKKSVGAGNA. The chain crosses the membrane as a helical span at residues 344 to 364; that stretch reads IAVQNLGENSAMLLMLGIYSL. Topologically, residues 365-366 are periplasmic; the sequence is AV. The helical transmembrane segment at 367–387 threads the bilayer; sequence MVGIPVVPIGIGFGALFALAI. Residues 388 to 397 are Cytoplasmic-facing; sequence TALWIWQRRH.

This sequence belongs to the major facilitator superfamily. LplT (TC 2.A.1.42) family.

It localises to the cell inner membrane. Catalyzes the facilitated diffusion of 2-acyl-glycero-3-phosphoethanolamine (2-acyl-GPE) into the cell. This chain is Lysophospholipid transporter LplT, found in Escherichia coli O81 (strain ED1a).